Reading from the N-terminus, the 207-residue chain is Urease accessory protein UreE (207 aa).

A disordered region spans residues 171–207 (HHGHAHSHSHSHDHDHDHDHDHQHGPGCAHGHGHDHH). Residues 180–194 (HSHDHDHDHDHDHQH) show a composition bias toward basic and acidic residues.

Belongs to the UreE family.

It localises to the cytoplasm. Functionally, involved in urease metallocenter assembly. Binds nickel. Probably functions as a nickel donor during metallocenter assembly. In Burkholderia lata (strain ATCC 17760 / DSM 23089 / LMG 22485 / NCIMB 9086 / R18194 / 383), this protein is Urease accessory protein UreE.